We begin with the raw amino-acid sequence, 274 residues long: MQYQHPSSSALGLSVPLYAPTPLQPVHPTPFYIDDILGRSSASNGTPALPTPTLPSPNSSFTSLVATYRTPIYEPTPIHPAFTHPGAALAASYGASTYANPLYPFSRPVSEYTHALIRHDTLGKPLLWSPFIQRPLHKRKGGQVRFSNDQTIELEKKFETQKYLSPPERKRLAKMLQLSERQVKTWFQNRRAKWRRLKQENPQGNKKDETESLENICEESQERCLSAEQKSRESSLDEPTSSPTSQETLDSEVSDDSDQEVDIEGDKGFYNCAH.

The homeobox DNA-binding region spans 139-198 (RKGGQVRFSNDQTIELEKKFETQKYLSPPERKRLAKMLQLSERQVKTWFQNRRAKWRRLK). Residues 197–274 (LKQENPQGNK…GDKGFYNCAH (78 aa)) are disordered. A compositionally biased stretch (polar residues) spans 237–248 (DEPTSSPTSQET). A compositionally biased stretch (acidic residues) spans 249–263 (LDSEVSDDSDQEVDI).

In terms of tissue distribution, expressed in the most dorsoanterior endomesoderm of the blastula and gastrula embryo, and later is restricted to the forming liver diverticulum.

Its subcellular location is the nucleus. In terms of biological role, recognizes the DNA sequence 5'-ATTAA-3'. Transcriptional repressor. Regulates the differentiation of both endothelial and blood cells. Probably plays a role in the proliferation of vascular endothelial cells during blood vessel development. Establishes anterior identity at two levels; acts early to enhance canonical wnt-signaling by repressing expression of tle4, and acts later to inhibit nodal-signaling by directly targeting nodal/nr1 and nodal2/nr2. May play a role in liver development. Induces heart development. The chain is Hematopoietically-expressed homeobox protein hhex from Xenopus tropicalis (Western clawed frog).